The following is a 448-amino-acid chain: Phosphohexose mutases (448 aa).

Residue Ser97 is the Phosphoserine intermediate of the active site. Positions 97, 237, 239, and 241 each coordinate Mg(2+).

It belongs to the phosphohexose mutase family. The cofactor is Mg(2+).

It carries out the reaction alpha-D-glucose 1-phosphate = alpha-D-glucose 6-phosphate. The catalysed reaction is alpha-D-mannose 1-phosphate = D-mannose 6-phosphate. It participates in nucleotide-sugar biosynthesis; GDP-alpha-D-mannose biosynthesis; alpha-D-mannose 1-phosphate from D-fructose 6-phosphate: step 2/2. Its function is as follows. Involved in xanthan production. The polypeptide is Phosphohexose mutases (xanA) (Xanthomonas campestris pv. campestris (strain B100)).